The sequence spans 602 residues: MSDDKGTYDPKEGCSDWFVLEAECSDASLDGDLEKLFEEGTDTDISDLIDNEDTVQGNSRELLCQQESEESEQQIHWLKRKYISSQEVLQLSPRLQCISISPQHKSKRRLFEQDSGLELSFNEAQDFTQQTLEVPATDVVPQGAKGLGIVKDLLKCNNVKAMLLAKFKEAFGVGFMELTRQYKSSKTCCRDWVLTVYAVQDELLESSKQLLIQHCAYIWLHQIPPMCLYLLCFNVGKSRETVLRLLTNLLQVSEIQIIAEPPKLRSTLSALFWYKGSMNPNVYAHGEYPEWIMTQTMINHQTAEATQFDLSTMVQYAYDNELSEEAEIAWHYAKLADTDANARAFLQHNSQARLVKDCAIMVRHYRRGEMKEMSMSSWIHKKLLVVEGEGHWSDIVKFVRYQDINFIQFLDSFKSFLHNTPKKSCMLIYGPPDTGKSMFTMSLIKVLKGKVLSFANYKSTFWLQPVADTKIALIDDVTYVCWDYIDQYLRNALDGGVVCLDMKHRAPCQIRFPPLMLTSNIDIMKEERYKYLRSRVQAFAFPHKFPFDSDNNPQFKLTDQSWKSFFERLWRQLELSDQEDEGDDGYSQRTFQCTTRESNGHL.

Residues 79–81 carry the Nuclear localization signal motif; it reads KRK. Ser85 and Ser92 each carry phosphoserine; by host. The Nuclear export signal motif lies at 91–100; sequence LSPRLQCISI. The tract at residues 142–305 is DNA-binding region; the sequence is QGAKGLGIVK…TMINHQTAEA (164 aa). The 151-residue stretch at 404–554 folds into the SF3 helicase domain; it reads INFIQFLDSF…FPFDSDNNPQ (151 aa). 430-437 is an ATP binding site; the sequence is GPPDTGKS.

This sequence belongs to the papillomaviridae E1 protein family. As to quaternary structure, can form hexamers. Interacts with E2 protein; this interaction increases E1 DNA binding specificity. Interacts with host DNA polymerase subunit POLA2. Interacts with host single stranded DNA-binding protein RPA1. Interacts with host TOP1; this interaction stimulates the enzymatic activity of TOP1. Post-translationally, phosphorylated.

It is found in the host nucleus. It catalyses the reaction Couples ATP hydrolysis with the unwinding of duplex DNA by translocating in the 3'-5' direction.. It carries out the reaction ATP + H2O = ADP + phosphate + H(+). Functionally, ATP-dependent DNA 3'-5' helicase required for initiation of viral DNA replication. It forms a complex with the viral E2 protein. The E1-E2 complex binds to the replication origin which contains binding sites for both proteins. During the initial step, a dimer of E1 interacts with a dimer of protein E2 leading to a complex that binds the viral origin of replication with high specificity. Then, a second dimer of E1 displaces the E2 dimer in an ATP-dependent manner to form the E1 tetramer. Following this, two E1 monomers are added to each half of the site, which results in the formation of two E1 trimers on the viral ori. Subsequently, two hexamers will be created. The double hexamer acts as a bi-directional helicase machinery and unwinds the viral DNA and then recruits the host DNA polymerase to start replication. The sequence is that of Replication protein E1 from Homo sapiens (Human).